The primary structure comprises 159 residues: SsrA-binding protein (159 aa).

This sequence belongs to the SmpB family.

Its subcellular location is the cytoplasm. Required for rescue of stalled ribosomes mediated by trans-translation. Binds to transfer-messenger RNA (tmRNA), required for stable association of tmRNA with ribosomes. tmRNA and SmpB together mimic tRNA shape, replacing the anticodon stem-loop with SmpB. tmRNA is encoded by the ssrA gene; the 2 termini fold to resemble tRNA(Ala) and it encodes a 'tag peptide', a short internal open reading frame. During trans-translation Ala-aminoacylated tmRNA acts like a tRNA, entering the A-site of stalled ribosomes, displacing the stalled mRNA. The ribosome then switches to translate the ORF on the tmRNA; the nascent peptide is terminated with the 'tag peptide' encoded by the tmRNA and targeted for degradation. The ribosome is freed to recommence translation, which seems to be the essential function of trans-translation. This Salinispora tropica (strain ATCC BAA-916 / DSM 44818 / JCM 13857 / NBRC 105044 / CNB-440) protein is SsrA-binding protein.